A 285-amino-acid chain; its full sequence is Chlorite dismutase (285 aa).

The signal sequence occupies residues 1 to 38 (MKVRCVSLVAAGLLTIAGSAIGQPAPAPMPAMAPAAKP). E105 serves as a coordination point for Ca(2+). H205 lines the heme pocket. R218 acts as the Proton acceptor in catalysis. Residues D227 and T266 each contribute to the Ca(2+) site.

The protein belongs to the chlorite dismutase family. In terms of assembly, homopentamer. Requires heme b as cofactor.

It localises to the periplasm. The catalysed reaction is chloride + O2 = chlorite. Its function is as follows. Catalyzes the heme-dependent decomposition of chlorite to O(2) and chloride with high efficiency and specificity. Used to detoxify chlorite, a by-product of the reduction of perchlorate, a primarily anthropogenic pollutant, in perchlorate-respiring bacteria. In Ideonella dechloratans, this protein is Chlorite dismutase (cld).